We begin with the raw amino-acid sequence, 475 residues long: Ribulose bisphosphate carboxylase large chain (475 aa).

The propeptide occupies Met-1–Ser-2. The residue at position 3 (Pro-3) is an N-acetylproline. Position 14 is an N6,N6,N6-trimethyllysine (Lys-14). Substrate is bound by residues Asn-123 and Thr-173. Lys-175 acts as the Proton acceptor in catalysis. Lys-177 lines the substrate pocket. Positions 201, 203, and 204 each coordinate Mg(2+). The residue at position 201 (Lys-201) is an N6-carboxylysine. His-294 (proton acceptor) is an active-site residue. Substrate is bound by residues Arg-295, His-327, and Ser-379.

It belongs to the RuBisCO large chain family. Type I subfamily. As to quaternary structure, heterohexadecamer of 8 large chains and 8 small chains; disulfide-linked. The disulfide link is formed within the large subunit homodimers. Requires Mg(2+) as cofactor. In terms of processing, the disulfide bond which can form in the large chain dimeric partners within the hexadecamer appears to be associated with oxidative stress and protein turnover.

It is found in the plastid. The protein resides in the chloroplast. It catalyses the reaction 2 (2R)-3-phosphoglycerate + 2 H(+) = D-ribulose 1,5-bisphosphate + CO2 + H2O. It carries out the reaction D-ribulose 1,5-bisphosphate + O2 = 2-phosphoglycolate + (2R)-3-phosphoglycerate + 2 H(+). Functionally, ruBisCO catalyzes two reactions: the carboxylation of D-ribulose 1,5-bisphosphate, the primary event in carbon dioxide fixation, as well as the oxidative fragmentation of the pentose substrate in the photorespiration process. Both reactions occur simultaneously and in competition at the same active site. The protein is Ribulose bisphosphate carboxylase large chain of Gossypium hirsutum (Upland cotton).